The chain runs to 67 residues: Beta-defensin 103A (67 aa).

Residues 1–22 (MRIHYLLFALLFLFLVPVPGHG) form the signal peptide. Disulfide bonds link Cys33-Cys62, Cys40-Cys55, and Cys45-Cys63.

Belongs to the beta-defensin family.

The protein resides in the secreted. Its function is as follows. Exhibits antimicrobial activity against Gram-positive and Gram-negative bacteria. In Pan troglodytes (Chimpanzee), this protein is Beta-defensin 103A (DEFB103A).